The chain runs to 643 residues: MSRPSTPLLDKVPTPDRLRALPERDLPQLAEELRTELIDAVSTTGGHLGAGLGVVELTVALHHVFNTPYDRIIWDVGHQAYPHKILTGRRDRIRTLRQAGGLSGFTKRAESEYDPFGAAHSSTSISAGLGMAVASELSGEKRNVIAVIGDGSMSAGMAYEAMNNAGALDARLIVILNDNDMSIAPPTGAMSAYLARLVSGRTYRSVREAAKQVAQKLPKFLQDKARKSEEYARAFFTGGTLFEELGFYYVGPIDGHNLDHLLPVLKNVRDTQKGPVLIHVVTQKGKGYAPAEAAADKYHGVNKFDVITGKQAKPPANAPSYTKIFGTSLIEEARHDDKIVAVTAAMPTGTGLDLFGEAFPKRVFDVGIAEQHAVTFAAGLASEGYKPFCAIYSTFLQRGYDQVVHDVSIQNLPVRFPIDRAGLVGADGPTHAGSFDTGFLAALPGFVVMAASDEAELRHMVRTAAEYDEGPISFRYPRGDGVGVDLPERGSVLEIGKGRIVREGTKVALLSFGTRLQECLAAAEELGAAGLSTTVVDARFAKPLDHDLIRRLAREHEVLVMVEEGAVGGFGSHVLQFLATDGLLDRGLKVRALTLPDIYQDHGKPDAMYAEAGLDRTGIVRTVFAALHRDELGHEALPTPFRA.

Residues histidine 78 and alanine 119–serine 121 contribute to the thiamine diphosphate site. Residue aspartate 150 coordinates Mg(2+). Thiamine diphosphate is bound by residues glycine 151–serine 152, asparagine 179, tyrosine 288, and glutamate 370. Position 179 (asparagine 179) interacts with Mg(2+).

This sequence belongs to the transketolase family. DXPS subfamily. Homodimer. The cofactor is Mg(2+). Requires thiamine diphosphate as cofactor.

The enzyme catalyses D-glyceraldehyde 3-phosphate + pyruvate + H(+) = 1-deoxy-D-xylulose 5-phosphate + CO2. Its pathway is metabolic intermediate biosynthesis; 1-deoxy-D-xylulose 5-phosphate biosynthesis; 1-deoxy-D-xylulose 5-phosphate from D-glyceraldehyde 3-phosphate and pyruvate: step 1/1. Its function is as follows. Catalyzes the acyloin condensation reaction between C atoms 2 and 3 of pyruvate and glyceraldehyde 3-phosphate to yield 1-deoxy-D-xylulose-5-phosphate (DXP). The polypeptide is 1-deoxy-D-xylulose-5-phosphate synthase (Brucella ovis (strain ATCC 25840 / 63/290 / NCTC 10512)).